The following is a 95-amino-acid chain: Aspartyl/glutamyl-tRNA(Asn/Gln) amidotransferase subunit C (95 aa).

This sequence belongs to the GatC family. As to quaternary structure, heterotrimer of A, B and C subunits.

It catalyses the reaction L-glutamyl-tRNA(Gln) + L-glutamine + ATP + H2O = L-glutaminyl-tRNA(Gln) + L-glutamate + ADP + phosphate + H(+). The catalysed reaction is L-aspartyl-tRNA(Asn) + L-glutamine + ATP + H2O = L-asparaginyl-tRNA(Asn) + L-glutamate + ADP + phosphate + 2 H(+). Its function is as follows. Allows the formation of correctly charged Asn-tRNA(Asn) or Gln-tRNA(Gln) through the transamidation of misacylated Asp-tRNA(Asn) or Glu-tRNA(Gln) in organisms which lack either or both of asparaginyl-tRNA or glutaminyl-tRNA synthetases. The reaction takes place in the presence of glutamine and ATP through an activated phospho-Asp-tRNA(Asn) or phospho-Glu-tRNA(Gln). This chain is Aspartyl/glutamyl-tRNA(Asn/Gln) amidotransferase subunit C, found in Geotalea uraniireducens (strain Rf4) (Geobacter uraniireducens).